A 159-amino-acid polypeptide reads, in one-letter code: Ribose-5-phosphate isomerase B (159 aa).

D-ribulose 5-phosphate contacts are provided by residues 8–9 (DH) and 67–71 (GSGNG). Catalysis depends on Glu72, which acts as the Proton acceptor. His99 (proton donor) is an active-site residue. D-ribulose 5-phosphate contacts are provided by Asn100, Arg110, Arg134, and Arg138.

It belongs to the LacAB/RpiB family. Homodimer.

The enzyme catalyses aldehydo-D-ribose 5-phosphate = D-ribulose 5-phosphate. It participates in carbohydrate degradation; pentose phosphate pathway; D-ribose 5-phosphate from D-ribulose 5-phosphate (non-oxidative stage): step 1/1. In terms of biological role, catalyzes the interconversion of ribulose-5-P and ribose-5-P. The chain is Ribose-5-phosphate isomerase B from Mycolicibacterium paratuberculosis (strain ATCC BAA-968 / K-10) (Mycobacterium paratuberculosis).